Reading from the N-terminus, the 217-residue chain is Leucyl/phenylalanyl-tRNA--protein transferase (217 aa).

Belongs to the L/F-transferase family.

It localises to the cytoplasm. It catalyses the reaction N-terminal L-lysyl-[protein] + L-leucyl-tRNA(Leu) = N-terminal L-leucyl-L-lysyl-[protein] + tRNA(Leu) + H(+). The catalysed reaction is N-terminal L-arginyl-[protein] + L-leucyl-tRNA(Leu) = N-terminal L-leucyl-L-arginyl-[protein] + tRNA(Leu) + H(+). The enzyme catalyses L-phenylalanyl-tRNA(Phe) + an N-terminal L-alpha-aminoacyl-[protein] = an N-terminal L-phenylalanyl-L-alpha-aminoacyl-[protein] + tRNA(Phe). Functionally, functions in the N-end rule pathway of protein degradation where it conjugates Leu, Phe and, less efficiently, Met from aminoacyl-tRNAs to the N-termini of proteins containing an N-terminal arginine or lysine. This Caulobacter vibrioides (strain ATCC 19089 / CIP 103742 / CB 15) (Caulobacter crescentus) protein is Leucyl/phenylalanyl-tRNA--protein transferase.